The primary structure comprises 606 residues: UvrABC system protein C (606 aa).

The region spanning serine 18–isoleucine 96 is the GIY-YIG domain. The UVR domain occupies threonine 205–isoleucine 240.

This sequence belongs to the UvrC family. Interacts with UvrB in an incision complex.

The protein localises to the cytoplasm. Functionally, the UvrABC repair system catalyzes the recognition and processing of DNA lesions. UvrC both incises the 5' and 3' sides of the lesion. The N-terminal half is responsible for the 3' incision and the C-terminal half is responsible for the 5' incision. The polypeptide is UvrABC system protein C (Nitrosospira multiformis (strain ATCC 25196 / NCIMB 11849 / C 71)).